A 562-amino-acid polypeptide reads, in one-letter code: NAD-dependent malic enzyme (562 aa).

Y101 (proton donor) is an active-site residue. NAD(+) is bound at residue R154. The Proton acceptor role is filled by K172. E243, D244, and D267 together coordinate a divalent metal cation. NAD(+) is bound by residues D267 and N415.

It belongs to the malic enzymes family. As to quaternary structure, homotetramer. Requires Mg(2+) as cofactor. It depends on Mn(2+) as a cofactor.

The enzyme catalyses (S)-malate + NAD(+) = pyruvate + CO2 + NADH. It carries out the reaction oxaloacetate + H(+) = pyruvate + CO2. This chain is NAD-dependent malic enzyme, found in Idiomarina loihiensis (strain ATCC BAA-735 / DSM 15497 / L2-TR).